The primary structure comprises 300 residues: MQSTLSQSPGSRFSQYMALTKPRVTQLAVFCAVIGMFLATPGMVPWHVLIGGTIGIWLLAGAAFAINCLVEQKIDAMMRRTAWRPSARGEITTPQILLFSAVLGSVGAWTLYTFTNPLTMWLTIATFVGYAVVYTLLLKPMTPQNIVIGGASGAMPPALGWAAVTGAVPGDAWILVLIIFVWTPPHFWVLALYRRKDYENAGLPMLPVTHGEKFTRLHILLYTVILFAVTLMPFISGMSGVVYLASAVLLGAVFLAYAWKIYRDYSDELARKAFRYSIVYLSLLFAALLVDHYARPLLGV.

Helical transmembrane passes span 24 to 44, 46 to 66, 94 to 114, 118 to 138, 146 to 166, 172 to 192, 224 to 244, and 278 to 298; these read VTQL…PGMV, WHVL…AFAI, PQIL…LYTF, LTMW…TLLL, IVIG…AVTG, AWIL…VLAL, VILF…VVYL, and IVYL…RPLL.

Belongs to the UbiA prenyltransferase family. Protoheme IX farnesyltransferase subfamily.

The protein resides in the cell inner membrane. It catalyses the reaction heme b + (2E,6E)-farnesyl diphosphate + H2O = Fe(II)-heme o + diphosphate. The protein operates within porphyrin-containing compound metabolism; heme O biosynthesis; heme O from protoheme: step 1/1. Converts heme B (protoheme IX) to heme O by substitution of the vinyl group on carbon 2 of heme B porphyrin ring with a hydroxyethyl farnesyl side group. The protein is Protoheme IX farnesyltransferase of Burkholderia ambifaria (strain ATCC BAA-244 / DSM 16087 / CCUG 44356 / LMG 19182 / AMMD) (Burkholderia cepacia (strain AMMD)).